A 105-amino-acid chain; its full sequence is Heat shock protein HspQ (105 aa).

This sequence belongs to the HspQ family.

It localises to the cytoplasm. Involved in the degradation of certain denaturated proteins, including DnaA, during heat shock stress. This chain is Heat shock protein HspQ, found in Klebsiella pneumoniae (strain 342).